A 120-amino-acid chain; its full sequence is Glycine cleavage system H protein (120 aa).

The region spanning 17-99 (VATVGITEHA…QGAAWFFKLK (83 aa)) is the Lipoyl-binding domain. Lys-58 is modified (N6-lipoyllysine).

Belongs to the GcvH family. As to quaternary structure, the glycine cleavage system is composed of four proteins: P, T, L and H. Requires (R)-lipoate as cofactor.

Functionally, the glycine cleavage system catalyzes the degradation of glycine. The H protein shuttles the methylamine group of glycine from the P protein to the T protein. This chain is Glycine cleavage system H protein, found in Sinorhizobium fredii (strain NBRC 101917 / NGR234).